We begin with the raw amino-acid sequence, 240 residues long: Phosducin-like protein 2 (240 aa).

A Phosducin domain is found at 54–214; the sequence is QRDKKIDDMS…MLGQAGAVPT (161 aa). Phosphoserine is present on residues serine 63 and serine 73. Residues 99-240 form a thioredoxin fold region; that stretch reads FGSVREISGQ…DLEDKSSDFY (142 aa).

The protein belongs to the phosducin family.

The protein localises to the cytoplasm. In terms of biological role, modulates the activation of caspases during apoptosis. This chain is Phosducin-like protein 2, found in Drosophila melanogaster (Fruit fly).